We begin with the raw amino-acid sequence, 75 residues long: Small integral membrane protein 7 (75 aa).

The first 17 residues, 1-17 (MIGDILLFGTLLMNAGA), serve as a signal peptide directing secretion. At 18–53 (VLNFKLKKKDTQGFGEESKEPSTGDNIREFLLSLRY) the chain is on the extracellular side. The helical transmembrane segment at 54 to 74 (FRIFIALWNVFMMLCMIVLFG) threads the bilayer. A topological domain (cytoplasmic) is located at residue S75.

It belongs to the SMIM7 family.

It is found in the membrane. This is Small integral membrane protein 7 (Smim7) from Mus musculus (Mouse).